A 96-amino-acid chain; its full sequence is 2Fe-2S ferredoxin-5 (96 aa).

Residues 2–96 (PKVIVANINA…GKGDVVIYLP (95 aa)) enclose the 2Fe-2S ferredoxin-type domain. 4 residues coordinate [2Fe-2S] cluster: Cys-36, Cys-42, Cys-45, and Cys-81.

Belongs to the adrenodoxin/putidaredoxin family. [2Fe-2S] cluster serves as cofactor.

Functionally, may be involved in the assembly of iron-sulfur clusters (Isc-Fd). This is 2Fe-2S ferredoxin-5 (fdx5) from Aquifex aeolicus (strain VF5).